The primary structure comprises 1059 residues: Carbamoyl phosphate synthase large chain (1059 aa).

The tract at residues 1 to 401 is carboxyphosphate synthetic domain; sequence MPKRKDIQKI…SLLKACRSLE (401 aa). ATP-binding residues include Arg129, Arg169, Gly175, Gly176, Arg208, Ile210, Glu215, Gly241, Ile242, His243, Gln284, and Glu298. Residues 133-327 form the ATP-grasp 1 domain; that stretch reads KQLMEELGQP…IAKLAAKIAV (195 aa). Residues Gln284, Glu298, and Asn300 each contribute to the Mg(2+) site. 3 residues coordinate Mn(2+): Gln284, Glu298, and Asn300. Positions 402–546 are oligomerization domain; sequence VGVDHNELPA…YSTYGFENES (145 aa). Residues 547 to 929 form a carbamoyl phosphate synthetic domain region; it reads VKSSKESVLV…ALYKAFEASY (383 aa). One can recognise an ATP-grasp 2 domain in the interval 671-861; it reads EQALKELDIP…MAQVATRLIL (191 aa). ATP-binding residues include Arg707, Ser746, Ile748, Glu752, Gly777, Val778, His779, Ser780, Gln820, and Glu832. Mg(2+)-binding residues include Gln820, Glu832, and Asn834. Mn(2+)-binding residues include Gln820, Glu832, and Asn834. Residues 930-1059 enclose the MGS-like domain; sequence LHLPNFGNVV…ESRSFTTEAI (130 aa). Residues 930–1059 are allosteric domain; the sequence is LHLPNFGNVV…ESRSFTTEAI (130 aa).

It belongs to the CarB family. Composed of two chains; the small (or glutamine) chain promotes the hydrolysis of glutamine to ammonia, which is used by the large (or ammonia) chain to synthesize carbamoyl phosphate. Tetramer of heterodimers (alpha,beta)4. It depends on Mg(2+) as a cofactor. Mn(2+) serves as cofactor.

The enzyme catalyses hydrogencarbonate + L-glutamine + 2 ATP + H2O = carbamoyl phosphate + L-glutamate + 2 ADP + phosphate + 2 H(+). It catalyses the reaction hydrogencarbonate + NH4(+) + 2 ATP = carbamoyl phosphate + 2 ADP + phosphate + 2 H(+). Its pathway is amino-acid biosynthesis; L-arginine biosynthesis; carbamoyl phosphate from bicarbonate: step 1/1. It functions in the pathway pyrimidine metabolism; UMP biosynthesis via de novo pathway; (S)-dihydroorotate from bicarbonate: step 1/3. Its function is as follows. Large subunit of the glutamine-dependent carbamoyl phosphate synthetase (CPSase). CPSase catalyzes the formation of carbamoyl phosphate from the ammonia moiety of glutamine, carbonate, and phosphate donated by ATP, constituting the first step of 2 biosynthetic pathways, one leading to arginine and/or urea and the other to pyrimidine nucleotides. The large subunit (synthetase) binds the substrates ammonia (free or transferred from glutamine from the small subunit), hydrogencarbonate and ATP and carries out an ATP-coupled ligase reaction, activating hydrogencarbonate by forming carboxy phosphate which reacts with ammonia to form carbamoyl phosphate. This chain is Carbamoyl phosphate synthase large chain, found in Streptococcus gordonii (strain Challis / ATCC 35105 / BCRC 15272 / CH1 / DL1 / V288).